Consider the following 141-residue polypeptide: Ribonuclease P protein component (141 aa).

Disordered regions lie at residues 37–56 and 114–141; these read RTEE…VGFT and RRIT…VNGK. Over residues 114 to 124 the composition is skewed to basic and acidic residues; sequence RRITAKGERRS.

This sequence belongs to the RnpA family. As to quaternary structure, consists of a catalytic RNA component (M1 or rnpB) and a protein subunit.

It carries out the reaction Endonucleolytic cleavage of RNA, removing 5'-extranucleotides from tRNA precursor.. Its function is as follows. RNaseP catalyzes the removal of the 5'-leader sequence from pre-tRNA to produce the mature 5'-terminus. It can also cleave other RNA substrates such as 4.5S RNA. The protein component plays an auxiliary but essential role in vivo by binding to the 5'-leader sequence and broadening the substrate specificity of the ribozyme. This is Ribonuclease P protein component from Brucella melitensis biotype 1 (strain ATCC 23456 / CCUG 17765 / NCTC 10094 / 16M).